We begin with the raw amino-acid sequence, 678 residues long: Glycine--tRNA ligase beta subunit (678 aa).

The protein belongs to the class-II aminoacyl-tRNA synthetase family. In terms of assembly, tetramer of two alpha and two beta subunits.

It is found in the cytoplasm. It carries out the reaction tRNA(Gly) + glycine + ATP = glycyl-tRNA(Gly) + AMP + diphosphate. This is Glycine--tRNA ligase beta subunit from Streptococcus pneumoniae (strain Hungary19A-6).